Reading from the N-terminus, the 339-residue chain is Ketol-acid reductoisomerase (NADP(+)) (339 aa).

Positions 1–182 constitute a KARI N-terminal Rossmann domain; sequence MRVYYDRDAD…GGGRSGIIET (182 aa). NADP(+) is bound by residues 24–27, arginine 48, serine 51, serine 53, and 83–86; these read YGSQ and DELQ. The active site involves histidine 108. Residue glycine 134 participates in NADP(+) binding. Positions 183–328 constitute a KARI C-terminal knotted domain; the sequence is TFREECETDL…EKLRGMMPWI (146 aa). Residues aspartate 191, glutamate 195, glutamate 227, and glutamate 231 each coordinate Mg(2+). Residue serine 252 coordinates substrate.

The protein belongs to the ketol-acid reductoisomerase family. It depends on Mg(2+) as a cofactor.

It carries out the reaction (2R)-2,3-dihydroxy-3-methylbutanoate + NADP(+) = (2S)-2-acetolactate + NADPH + H(+). It catalyses the reaction (2R,3R)-2,3-dihydroxy-3-methylpentanoate + NADP(+) = (S)-2-ethyl-2-hydroxy-3-oxobutanoate + NADPH + H(+). It functions in the pathway amino-acid biosynthesis; L-isoleucine biosynthesis; L-isoleucine from 2-oxobutanoate: step 2/4. It participates in amino-acid biosynthesis; L-valine biosynthesis; L-valine from pyruvate: step 2/4. Involved in the biosynthesis of branched-chain amino acids (BCAA). Catalyzes an alkyl-migration followed by a ketol-acid reduction of (S)-2-acetolactate (S2AL) to yield (R)-2,3-dihydroxy-isovalerate. In the isomerase reaction, S2AL is rearranged via a Mg-dependent methyl migration to produce 3-hydroxy-3-methyl-2-ketobutyrate (HMKB). In the reductase reaction, this 2-ketoacid undergoes a metal-dependent reduction by NADPH to yield (R)-2,3-dihydroxy-isovalerate. This Magnetospirillum molischianum (Rhodospirillum molischianum) protein is Ketol-acid reductoisomerase (NADP(+)).